Consider the following 328-residue polypeptide: GMP reductase (328 aa).

Catalysis depends on cysteine 176, which acts as the Thioimidate intermediate. Position 205 to 228 (205 to 228) interacts with NADP(+); it reads IIADGGIRTHGDIAKSIRFGASMI.

This sequence belongs to the IMPDH/GMPR family. GuaC type 2 subfamily.

It catalyses the reaction IMP + NH4(+) + NADP(+) = GMP + NADPH + 2 H(+). Its function is as follows. Catalyzes the irreversible NADPH-dependent deamination of GMP to IMP. It functions in the conversion of nucleobase, nucleoside and nucleotide derivatives of G to A nucleotides, and in maintaining the intracellular balance of A and G nucleotides. The sequence is that of GMP reductase from Streptococcus pneumoniae (strain CGSP14).